The following is a 274-amino-acid chain: MSRIANTFAKTKKENRAALIAFLTAGDPSIEATPALLDSLVENGVDIIELGMPFSDPMADGPAIQKANLRALAAKTGYNDIFRIATEFRKRHPETPLILMGYANPMTFKGSDSFAASAKEAGVDGIICVDIPPEEDATLGVAVREKGMDMIRLATPTSDEARLKIILDGASGFLYYVSVAGVTGLQQATEASIDAALDRIKAVTDLPVAVGFGIRSPEQAAAIAKKADAVVVGSAFVSCIEKAVTNRQDPNAALEKLAKELSTAISDARKEAAL.

Active-site proton acceptor residues include Glu49 and Asp60.

It belongs to the TrpA family. As to quaternary structure, tetramer of two alpha and two beta chains.

The catalysed reaction is (1S,2R)-1-C-(indol-3-yl)glycerol 3-phosphate + L-serine = D-glyceraldehyde 3-phosphate + L-tryptophan + H2O. It functions in the pathway amino-acid biosynthesis; L-tryptophan biosynthesis; L-tryptophan from chorismate: step 5/5. The alpha subunit is responsible for the aldol cleavage of indoleglycerol phosphate to indole and glyceraldehyde 3-phosphate. The polypeptide is Tryptophan synthase alpha chain (Zymomonas mobilis subsp. mobilis (strain ATCC 31821 / ZM4 / CP4)).